The primary structure comprises 718 residues: Mitochondrial potassium channel ATP-binding subunit (718 aa).

Residues methionine 1–phenylalanine 25 constitute a mitochondrion transit peptide. Helical transmembrane passes span leucine 128 to isoleucine 148, threonine 179 to leucine 199, and leucine 279 to leucine 299. In terms of domain architecture, ABC transmembrane type-1 spans valine 133–arginine 420. In terms of domain architecture, ABC transporter spans valine 455–arginine 692. Glycine 490–threonine 497 is an ATP binding site. Residues alanine 697–serine 718 form a disordered region.

This sequence belongs to the ABC transporter superfamily. ABCB family. Multidrug resistance exporter (TC 3.A.1.201) subfamily. The mitochondrial potassium channel (mitoK(ATP)) is composed of 4 subunits of CCDC51/MITOK and 4 subunits of ABCB8/MITOSUR. Physically interacts with PAAT. Interacts with Neuropilin-1 (NRP1) in mitochondria.

It localises to the mitochondrion inner membrane. Channel activity inhibited by ATP via ABCB8/MITOSUR subunit. ATP-binding subunit of the mitochondrial ATP-gated potassium channel (mitoK(ATP)). Together with pore-forming subunit CCDC51/MITOK of the mitoK(ATP) channel, mediates ATP-dependent potassium currents across the mitochondrial inner membrane. An increase in ATP intracellular levels closes the channel, inhibiting K(+) transport, whereas a decrease in ATP levels enhances K(+) uptake in the mitochondrial matrix. Plays a role in mitochondrial iron transport. Required for maintenance of normal cardiac function, possibly by influencing mitochondrial iron export and regulating the maturation of cytosolic iron sulfur cluster-containing enzymes. The sequence is that of Mitochondrial potassium channel ATP-binding subunit (ABCB8) from Pongo abelii (Sumatran orangutan).